A 226-amino-acid polypeptide reads, in one-letter code: UPF0502 protein Daci_5373 (226 aa).

It belongs to the UPF0502 family.

The protein is UPF0502 protein Daci_5373 of Delftia acidovorans (strain DSM 14801 / SPH-1).